We begin with the raw amino-acid sequence, 420 residues long: Glucose-1-phosphate adenylyltransferase (420 aa).

Alpha-D-glucose 1-phosphate-binding positions include tyrosine 107, glycine 172, 187–188 (EK), and serine 205.

The protein belongs to the bacterial/plant glucose-1-phosphate adenylyltransferase family. In terms of assembly, homotetramer.

The catalysed reaction is alpha-D-glucose 1-phosphate + ATP + H(+) = ADP-alpha-D-glucose + diphosphate. It functions in the pathway glycan biosynthesis; glycogen biosynthesis. Involved in the biosynthesis of ADP-glucose, a building block required for the elongation reactions to produce glycogen. Catalyzes the reaction between ATP and alpha-D-glucose 1-phosphate (G1P) to produce pyrophosphate and ADP-Glc. This chain is Glucose-1-phosphate adenylyltransferase, found in Rhodopseudomonas palustris (strain HaA2).